The primary structure comprises 464 residues: uncharacterized protein (464 aa).

The TRAM domain maps to 13–71 (MLKVSDIIQIKIDKIVFGGEGLGYYNGFAVFVPMSIPEDELEIEIISIKKTYARGLIKN). 4 residues coordinate S-adenosyl-L-methionine: Gln295, Tyr324, Glu345, and Asp393. Cys420 (nucleophile) is an active-site residue.

The protein belongs to the class I-like SAM-binding methyltransferase superfamily. RNA M5U methyltransferase family.

This is an uncharacterized protein from Fusobacterium nucleatum subsp. nucleatum (strain ATCC 25586 / DSM 15643 / BCRC 10681 / CIP 101130 / JCM 8532 / KCTC 2640 / LMG 13131 / VPI 4355).